Here is a 574-residue protein sequence, read N- to C-terminus: Putative DNA-directed RNA polymerase subunit alpha-like 1 (574 aa).

The segment at 1 to 352 (MTNNKNFADW…ELFSLFLQTS (352 aa)) is alpha N-terminal domain (alpha-NTD). The alpha C-terminal domain (alpha-CTD) stretch occupies residues 419–574 (PDYDRYNSIT…RERKRGNREF (156 aa)). Residues 534 to 574 (QETLRKEQDEQSSQQQKDQMEKRRWERQNRERERKRGNREF) form a disordered region. Residues 551–574 (DQMEKRRWERQNRERERKRGNREF) are compositionally biased toward basic and acidic residues.

This sequence belongs to the RNA polymerase alpha chain family. In plastids the minimal PEP RNA polymerase catalytic core is composed of four subunits: alpha, beta, beta', and beta''. When a (nuclear-encoded) sigma factor is associated with the core the holoenzyme is formed, which can initiate transcription.

The protein localises to the plastid. It localises to the chloroplast. It carries out the reaction RNA(n) + a ribonucleoside 5'-triphosphate = RNA(n+1) + diphosphate. Its function is as follows. DNA-dependent RNA polymerase catalyzes the transcription of DNA into RNA using the four ribonucleoside triphosphates as substrates. This is Putative DNA-directed RNA polymerase subunit alpha-like 1 (rpoAL1-A) from Pelargonium hortorum (Common geranium).